Here is a 726-residue protein sequence, read N- to C-terminus: Kinesin-like protein KIN-10B (726 aa).

Disordered stretches follow at residues 1-20 (MEQQ…RVVA), 60-82 (AATA…QQQK), and 402-423 (KNAR…TANR). Positions 15 to 359 (GVRVVARICP…LALASRSSQV (345 aa)) constitute a Kinesin motor domain. Residues 408-423 (FNNSGVKGGQTPTANR) are compositionally biased toward polar residues.

This sequence belongs to the TRAFAC class myosin-kinesin ATPase superfamily. Kinesin family. KIN-10 subfamily.

The sequence is that of Kinesin-like protein KIN-10B from Oryza sativa subsp. japonica (Rice).